The primary structure comprises 802 residues: Valine--tRNA ligase (802 aa).

The 'HIGH' region motif lies at 45 to 55 (PTISGQLHIGH). A 'KMSKS' region motif is present at residues 524 to 528 (KMSKS). Residue K527 coordinates ATP.

The protein belongs to the class-I aminoacyl-tRNA synthetase family. ValS type 2 subfamily. Monomer.

It localises to the cytoplasm. It catalyses the reaction tRNA(Val) + L-valine + ATP = L-valyl-tRNA(Val) + AMP + diphosphate. Functionally, catalyzes the attachment of valine to tRNA(Val). As ValRS can inadvertently accommodate and process structurally similar amino acids such as threonine, to avoid such errors, it has a 'posttransfer' editing activity that hydrolyzes mischarged Thr-tRNA(Val) in a tRNA-dependent manner. The sequence is that of Valine--tRNA ligase from Ehrlichia canis (strain Jake).